Here is an 87-residue protein sequence, read N- to C-terminus: Large ribosomal subunit protein bL27 (87 aa).

The disordered stretch occupies residues methionine 1–leucine 21.

It belongs to the bacterial ribosomal protein bL27 family.

The chain is Large ribosomal subunit protein bL27 from Paraburkholderia phytofirmans (strain DSM 17436 / LMG 22146 / PsJN) (Burkholderia phytofirmans).